Reading from the N-terminus, the 562-residue chain is RNA N(6)-adenosine-methyltransferase METTL16 (562 aa).

An RNA-binding region spans residues 17 to 20 (PPDF). Positions 82, 110, 114, 133, 164, and 184 each coordinate S-adenosyl-L-methionine. Residues 163-167 (KTLLM) are K-loop. RNA-binding regions lie at residues 199 to 211 (SRNP…SSVN), 250 to 254 (GKKCS), and 277 to 283 (QGRTMRW). Residues 289 to 400 (FYDDVTVPSP…QLREVPRAPE (112 aa)) form a VCR 1 region. At Ser-329 the chain carries Phosphoserine. Over residues 402 to 413 (VIQALEEKKPTP) the composition is skewed to basic and acidic residues. Residues 402–498 (VIQALEEKKP…DQEASEQFGS (97 aa)) form a disordered region. Acidic residues predominate over residues 458–467 (ENPEPTEDER). Thr-463 bears the Phosphothreonine mark. The span at 480 to 496 (CQGSSNGAQDQEASEQF) shows a compositional bias: polar residues. Positions 514–562 (YLFKCLINVKKEVDDALVEMHWVEGQNRDLMNQLCTYIRNQIFRLVAVN) are VCR 2.

Belongs to the methyltransferase superfamily. METTL16/RlmF family. As to quaternary structure, interacts with MEPCE. Interacts with LARP7.

It localises to the nucleus. The protein localises to the cytoplasm. The catalysed reaction is adenosine in U6 snRNA + S-adenosyl-L-methionine = N(6)-methyladenosine in U6 snRNA + S-adenosyl-L-homocysteine + H(+). The enzyme catalyses an adenosine in mRNA + S-adenosyl-L-methionine = an N(6)-methyladenosine in mRNA + S-adenosyl-L-homocysteine + H(+). Methyltransferase activity is autoinhibited by the K-loop region that blocks S-adenosyl-L-methionine-binding. Upon activation, K-loop changes conformation, allowing S-adenosyl-L-methionine-binding and subsequent methyltransferase activity. mRNA N6-adenosine-methyltransferase activity is inhibited by zinc. In terms of biological role, RNA N6-methyltransferase that methylates adenosine residues at the N(6) position of a subset of RNAs and is involved in S-adenosyl-L-methionine homeostasis by regulating expression of MAT2A transcripts. Able to N6-methylate a subset of mRNAs and U6 small nuclear RNAs (U6 snRNAs). In contrast to the METTL3-METTL14 heterodimer, only able to methylate a limited number of RNAs: requires both a 5'UACAGAGAA-3' nonamer sequence and a specific RNA structure. Plays a key role in S-adenosyl-L-methionine homeostasis by mediating N6-methylation of MAT2A mRNAs, altering splicing of MAT2A transcripts: in presence of S-adenosyl-L-methionine, binds the 3'-UTR region of MAT2A mRNA and specifically N6-methylates the first hairpin of MAT2A mRNA, preventing recognition of their 3'-splice site by U2AF1/U2AF35, thereby inhibiting splicing and protein production of S-adenosylmethionine synthase. In S-adenosyl-L-methionine-limiting conditions, binds the 3'-UTR region of MAT2A mRNA but stalls due to the lack of a methyl donor, preventing N6-methylation and promoting expression of MAT2A. In addition to mRNAs, also able to mediate N6-methylation of U6 small nuclear RNA (U6 snRNA): specifically N6-methylates adenine in position 43 of U6 snRNAs. Also able to bind various lncRNAs, such as 7SK snRNA (7SK RNA) or 7SL RNA. Specifically binds the 3'-end of the MALAT1 long non-coding RNA. This Homo sapiens (Human) protein is RNA N(6)-adenosine-methyltransferase METTL16.